We begin with the raw amino-acid sequence, 596 residues long: Elongation factor 4 (596 aa).

The tr-type G domain maps to 2–184 (KHIRNFSIIA…VIVEQIPPPE (183 aa)). GTP is bound by residues 14 to 19 (DHGKST) and 131 to 134 (NKID).

Belongs to the TRAFAC class translation factor GTPase superfamily. Classic translation factor GTPase family. LepA subfamily.

The protein localises to the cell inner membrane. It carries out the reaction GTP + H2O = GDP + phosphate + H(+). Functionally, required for accurate and efficient protein synthesis under certain stress conditions. May act as a fidelity factor of the translation reaction, by catalyzing a one-codon backward translocation of tRNAs on improperly translocated ribosomes. Back-translocation proceeds from a post-translocation (POST) complex to a pre-translocation (PRE) complex, thus giving elongation factor G a second chance to translocate the tRNAs correctly. Binds to ribosomes in a GTP-dependent manner. The sequence is that of Elongation factor 4 from Shewanella sp. (strain MR-7).